Consider the following 185-residue polypeptide: Ribosome-recycling factor (185 aa).

This sequence belongs to the RRF family.

It localises to the cytoplasm. Functionally, responsible for the release of ribosomes from messenger RNA at the termination of protein biosynthesis. May increase the efficiency of translation by recycling ribosomes from one round of translation to another. The polypeptide is Ribosome-recycling factor (Treponema denticola (strain ATCC 35405 / DSM 14222 / CIP 103919 / JCM 8153 / KCTC 15104)).